We begin with the raw amino-acid sequence, 125 residues long: Large ribosomal subunit protein uL22 (125 aa).

Belongs to the universal ribosomal protein uL22 family. In terms of assembly, part of the 50S ribosomal subunit.

Its function is as follows. This protein binds specifically to 23S rRNA; its binding is stimulated by other ribosomal proteins, e.g. L4, L17, and L20. It is important during the early stages of 50S assembly. It makes multiple contacts with different domains of the 23S rRNA in the assembled 50S subunit and ribosome. Functionally, the globular domain of the protein is located near the polypeptide exit tunnel on the outside of the subunit, while an extended beta-hairpin is found that lines the wall of the exit tunnel in the center of the 70S ribosome. The protein is Large ribosomal subunit protein uL22 of Acetivibrio thermocellus (strain ATCC 27405 / DSM 1237 / JCM 9322 / NBRC 103400 / NCIMB 10682 / NRRL B-4536 / VPI 7372) (Clostridium thermocellum).